Reading from the N-terminus, the 925-residue chain is Glutamate receptor 3.1 (925 aa).

The first 25 residues, 1–25 (MLSSMNWVLLSFIIVLGGGLLLSEG), serve as a signal peptide directing secretion. The Extracellular portion of the chain corresponds to 26–591 (ASSSRPPVIK…NPWAFLRPFT (566 aa)). Residues Asn309, Asn341, Asn359, Asn419, Asn437, and Asn488 are each glycosylated (N-linked (GlcNAc...) asparagine). The chain crosses the membrane as a helical span at residues 592-612 (LPMWAVTASFFVIVGAAIWIL). Topologically, residues 613 to 621 (EHRINDEFR) are cytoplasmic. A helical membrane pass occupies residues 622–642 (GPPRRQIITILWFTFSTMFFS). Residues 643–653 (HRETTVSTLGR) lie on the Cytoplasmic side of the membrane. Residues 654-674 (MVLLIWLFVVLIITSSYTASL) form a helical membrane-spanning segment. At 675-831 (TSILTVQQLN…GDSEQLNVHS (157 aa)) the chain is on the extracellular side. Residues Asn738 and Asn812 are each glycosylated (N-linked (GlcNAc...) asparagine). A helical transmembrane segment spans residues 832 to 852 (FWGMFLVVGIACLVALFIHFF). The Cytoplasmic segment spans residues 853–925 (KIIRDFCKDT…ISRTASRRPI (73 aa)). Residues 897-925 (KRRLKRKRNNDHSMNANSIISRTASRRPI) form a disordered region. Over residues 908–919 (HSMNANSIISRT) the composition is skewed to polar residues.

The protein belongs to the glutamate-gated ion channel (TC 1.A.10.1) family. May form heteromers. In terms of tissue distribution, expressed predominantly in roots. Firt detected in the vascular tissues of the cotyledons, and later in the vasculature of all organs. In leaves, preferentially expressed in guard cells.

It is found in the membrane. In terms of biological role, glutamate-gated receptor that probably acts as a non-selective cation channel. May be involved in light-signal transduction and calcium homeostasis via the regulation of calcium influx into cells. Required for the long-term calcium oscillation-regulated stomatal movements. This Arabidopsis thaliana (Mouse-ear cress) protein is Glutamate receptor 3.1 (GLR3.1).